A 642-amino-acid chain; its full sequence is Aryl hydrocarbon receptor nuclear translocator homolog (642 aa).

Positions 13–66 (ASRENHCEIERRRRNKMTAYITELSDMVPTCSALARKPDKLTILRMAVAHMKAL) constitute a bHLH domain. PAS domains lie at 85-156 (DQEL…ESQN) and 271-341 (TAAN…LKQK). One can recognise a PAC domain in the interval 346 to 389 (SLLYRARAKNSEYVWLRTQAYAFLNPYTDEVEYIVCTNSSGKTM). The interval 450 to 612 (QAPTPQQQQQ…GPAGAGQPQG (163 aa)) is disordered. Polar residues-rich tracts occupy residues 463-482 (RPGS…THSP) and 528-554 (YQYQ…NGNR). Residues 555 to 564 (QQAQPGAYQA) are compositionally biased toward low complexity.

As to quaternary structure, efficient DNA binding requires dimerization with another bHLH protein. Heterodimer with ahr, trh or sim. In terms of tissue distribution, at stage 11, expression is detected in tracheal pits. At later stages, strong expression is also detected in the CNS.

It localises to the nucleus. In terms of biological role, heterodimers of tgo/trh are involved in the control of breathless expression. Plays a role in the cellular or tissue response to oxygen deprivation. This chain is Aryl hydrocarbon receptor nuclear translocator homolog (tgo), found in Drosophila melanogaster (Fruit fly).